The chain runs to 289 residues: HTH-type transcriptional regulator CatR (289 aa).

Residues 1 to 57 (MELRHLRYFKVLAETLNFTRAAELLHIAQPPLSRQISQLEDQLGTLLVVRERPLRLT) enclose the HTH lysR-type domain. The segment at residues 18 to 37 (FTRAAELLHIAQPPLSRQIS) is a DNA-binding region (H-T-H motif).

Belongs to the LysR transcriptional regulatory family.

Its subcellular location is the cytoplasm. Its function is as follows. Positive regulator of the catBC operon that degrades catechol to acetyl-CoA. CatR binds in trans to the catR-catBC promoter-control region in the presence or absence of inducer but only activates the catBC operon in the presence of the inducer, cis-cis-muconate. This is HTH-type transcriptional regulator CatR (catR) from Pseudomonas putida (Arthrobacter siderocapsulatus).